Here is a 101-residue protein sequence, read N- to C-terminus: CRISPR-associated endoribonuclease Cas2 (101 aa).

Asp-8 is a Mg(2+) binding site.

It belongs to the CRISPR-associated endoribonuclease Cas2 protein family. Homodimer, forms a heterotetramer with a Cas1 homodimer. It depends on Mg(2+) as a cofactor.

Functionally, CRISPR (clustered regularly interspaced short palindromic repeat), is an adaptive immune system that provides protection against mobile genetic elements (viruses, transposable elements and conjugative plasmids). CRISPR clusters contain sequences complementary to antecedent mobile elements and target invading nucleic acids. CRISPR clusters are transcribed and processed into CRISPR RNA (crRNA). Functions as a ssRNA-specific endoribonuclease. Involved in the integration of spacer DNA into the CRISPR cassette. This Lacticaseibacillus rhamnosus (strain ATCC 53103 / LMG 18243 / GG) (Lactobacillus rhamnosus) protein is CRISPR-associated endoribonuclease Cas2.